Consider the following 2255-residue polypeptide: Non-reducing polyketide synthase nvfA (2255 aa).

The tract at residues isoleucine 13–glutamate 251 is N-terminal acylcarrier protein transacylase domain (SAT). The region spanning valine 365–glutamine 781 is the Ketosynthase family 3 (KS3) domain. Active-site for beta-ketoacyl synthase activity residues include cysteine 530, histidine 665, and histidine 704. Residues leucine 887–alanine 1187 are malonyl-CoA:ACP transacylase (MAT) domain. Catalysis depends on serine 974, which acts as the For acyl/malonyl transferase activity. An N-terminal hotdog fold region spans residues glutamate 1229–serine 1357. In terms of domain architecture, PKS/mFAS DH spans glutamate 1229–threonine 1536. A product template (PT) domain region spans residues glycine 1232–leucine 1535. Histidine 1262 serves as the catalytic Proton acceptor; for dehydratase activity. Positions serine 1385–threonine 1536 are C-terminal hotdog fold. Catalysis depends on aspartate 1443, which acts as the Proton donor; for dehydratase activity. Residues threonine 1581–alanine 1655 enclose the Carrier domain. Serine 1615 carries the post-translational modification O-(pantetheine 4'-phosphoryl)serine. The tract at residues histidine 1809–asparagine 2042 is methyltransferase (CMeT) domain. A thioesterase (TE) domain region spans residues leucine 2109–tyrosine 2227. The For thioesterase activity role is filled by serine 2194.

It carries out the reaction 3 malonyl-CoA + acetyl-CoA + 2 S-adenosyl-L-methionine = 3,5-dimethylorsellinate + 2 S-adenosyl-L-homocysteine + 3 CO2 + 4 CoA. It functions in the pathway secondary metabolite biosynthesis; terpenoid biosynthesis. Functionally, non-reducing polyketide synthase; part of the gene cluster that mediates the biosynthesis of novofumigatonin, a heavily oxygenated meroterpenoid containing a unique orthoester moiety. The first step of the pathway is the synthesis of 3,5-dimethylorsellinic acid (DMOA) by the polyketide synthase nvfA via condensation of one acetyl-CoA starter unit with 3 malonyl-CoA units and 2 methylations. DMOA is then converted to farnesyl-DMOA by the farnesyltransferase nvfB. Epoxydation by FAD-dependent monooxygenase nvfK, followed by a protonation-initiated cyclization catalyzed by the terpene cyclase nvfL leads to the production of asnavolin H. The short chain dehydrogenase nvfC then as a 3-OH dehydrogenase of asnovolin H to yield chemesin D. There are two branches to synthesize asnovolin A from chemesin D. In one branch, chemesin D undergoes Baeyer-Villiger oxidation by nvfH, methylation by nvfJ, and enoyl reduction by the nvfM D enoylreductase that reduces the double bond between C-5'and C-6', to form respectively asnovolin I, asnovolin K, and asnovolin A. In the other branch, the methylation precedes the Baeyer-Villiger oxidation and the enoyl reduction to yield asnovolin A via the asnovolin J intermediate. Asnovolin A is further converted to fumigatonoid A by the Fe(II)/2-oxoglutarate-dependent dioxygenase nvfI that catalyzes an endoperoxidation reaction. The alpha/beta hydrolase nvfD then acts as an epimerase that converts fumigatonoid A to its C-5' epimer, which then undergoes spontaneous or nvfD-catalyzed lactonization. The following step utilizes the ketoreductase nvfG to produce fumigatonoid B. The dioxygenase nvfE further converts fumigatonoid B into fumigatonoid C. Finally the Fe(II)/2-oxoglutarate-dependent dioxygenase nvfF catalyzes two rounds of oxidation to transform fumigatonoid C into the end product, novofumigatonin A. The polypeptide is Non-reducing polyketide synthase nvfA (Aspergillus novofumigatus (strain IBT 16806)).